A 120-amino-acid chain; its full sequence is Adult-specific rigid cuticular protein 11.9 (120 aa).

The Chitin-binding type R&amp;R domain occupies 9–87 (GGAYNFGYNT…ALAAMAPKAP (79 aa)).

In terms of biological role, component of the rigid cuticle of the spider. This Araneus diadematus (European garden spider) protein is Adult-specific rigid cuticular protein 11.9.